We begin with the raw amino-acid sequence, 447 residues long: UPF0210 protein LSEI_0897 (447 aa).

The protein belongs to the UPF0210 family. In terms of assembly, homodimer.

The chain is UPF0210 protein LSEI_0897 from Lacticaseibacillus paracasei (strain ATCC 334 / BCRC 17002 / CCUG 31169 / CIP 107868 / KCTC 3260 / NRRL B-441) (Lactobacillus paracasei).